A 336-amino-acid chain; its full sequence is Ferrochelatase (336 aa).

His206 and Glu287 together coordinate Fe cation.

Belongs to the ferrochelatase family.

The protein resides in the cytoplasm. It carries out the reaction heme b + 2 H(+) = protoporphyrin IX + Fe(2+). The protein operates within porphyrin-containing compound metabolism; protoheme biosynthesis; protoheme from protoporphyrin-IX: step 1/1. Functionally, catalyzes the ferrous insertion into protoporphyrin IX. The polypeptide is Ferrochelatase (Neisseria meningitidis serogroup A / serotype 4A (strain DSM 15465 / Z2491)).